The primary structure comprises 914 residues: MATTPAAAFEALMDGVTSWELPEGPVPSELLLTGEAAFPVMVNDKGQVLIAASFYGRGRLVVVSHEGYLLDAGLARFLLNAVRWLSPSPGAPVGVHPSLASLAHILEGSGVEAQVHPEPAEPLGVYCISAYNDTMTAELIQFVKRGGGLLIGGQAWHWASQHGSDQVLSEFPGNQVTSVAGVYFTDTYGVKGRFKVSKKVPKIPLQVRCGEDLRQDQQQLLEGISELDIGTKGLPSQLLVHGALAFPLGLDASLRCFLAAARYGRGRVVLAAHEGMLSAPSLGPFLLNAVRWLAKGQTGKVGVNTSLEKLHTLLLEHGLECSLEPHLTSGVCVYCCTAYSDKEAKQLQEFVAEGGGLLIGGHAWWWASQNPGRSALADFPGNVILNSFGLSILPWTLDPGCFPVPSADSLNYHFRKALSEFQATLNLEGGNLEKNWLAKLRVDGAAFLQIPAEGVPAYASLHRLLRKQLRLRLSGFPAVSRENPVAGDSCEAVVLCLATELARSGTDCSELAQGLGAWSCSSNLCPSEHTVEINARNPSDDAWMSTGLNLPNGQLTEVCLCEAAACAGLKLQIGCHTDNLMSASKLSRAPVVTHQCHMDRTEQLVSNLWGGLLYVIVPTGCNLGPMSITIKRAVPAPYYKLGETSLEAWRSCIQESPAPWGELATDNIILTVPTADLRALEDPEPLLRLWDEMMEAIARLAAQPFPFRRPERIVADVQISAGWMHSGYPIMCHLESVSELIDETGMRSRGLWGPVHELGHNQQREQWEFPPHTTEATCNLWSVYVHETVLGIPRAQAHPALSPPERENRIKTHLEKGAPLCDWKVWTALETYLQLQEAFGWEPFTQLFAEYQTLSDIPNDNPGKMNLWVRKFSEKVQKNLAPFFEAWGWPVEKEVASSLACLPEWEENPMRMYI.

In terms of domain architecture, Peptidase M60 spans 541 to 840; the sequence is DAWMSTGLNL…TYLQLQEAFG (300 aa).

This sequence belongs to the TCAF family. Interacts with TRPM8 (via N-terminus and C-terminus domains); the interaction inhibits TRPM8 channel activity. Interacts with TRPV6.

It is found in the cell membrane. Negatively regulates the plasma membrane cation channel TRPM8 activity. Involved in the recruitment of TRPM8 to the cell surface. Promotes prostate cancer cell migration stimulation in a TRPM8-dependent manner. The protein is TRPM8 channel-associated factor 2 of Bos taurus (Bovine).